Here is an 837-residue protein sequence, read N- to C-terminus: Anaphase-promoting complex subunit 2 (837 aa).

Ser-233, Ser-329, Ser-485, Ser-549, and Ser-712 each carry phosphoserine. The disordered stretch occupies residues 478–508 (CLETGQDSEDDSGEPEDWVPDPVDADPVKSS). Acidic residues predominate over residues 483-496 (QDSEDDSGEPEDWV). Phosphotyrosine is present on Tyr-825.

Belongs to the cullin family. As to quaternary structure, the mammalian APC/C is composed at least of 14 distinct subunits ANAPC1, ANAPC2, CDC27/APC3, ANAPC4, ANAPC5, CDC16/APC6, ANAPC7, CDC23/APC8, ANAPC10, ANAPC11, CDC26/APC12, ANAPC13, ANAPC15 and ANAPC16 that assemble into a complex of at least 19 chains with a combined molecular mass of around 1.2 MDa; APC/C interacts with FZR1 and FBXO5. In the context of the APC/C complex, directly interacts with UBE2C and UBE2S. Interacts (via cullin domain) with ANAPC11 and with UBCH10. Interacts with NEUROD2. Interacts with FBXO43; the interaction is direct.

Its pathway is protein modification; protein ubiquitination. Its function is as follows. Together with the RING-H2 protein ANAPC11, constitutes the catalytic component of the anaphase promoting complex/cyclosome (APC/C), a cell cycle-regulated E3 ubiquitin ligase that controls progression through mitosis and the G1 phase of the cell cycle. The APC/C complex acts by mediating ubiquitination and subsequent degradation of target proteins: it mainly mediates the formation of 'Lys-11'-linked polyubiquitin chains and, to a lower extent, the formation of 'Lys-48'- and 'Lys-63'-linked polyubiquitin chains. The APC/C complex catalyzes assembly of branched 'Lys-11'-/'Lys-48'-linked branched ubiquitin chains on target proteins. The CDC20-APC/C complex positively regulates the formation of synaptic vesicle clustering at active zone to the presynaptic membrane in postmitotic neurons. CDC20-APC/C-induced degradation of NEUROD2 drives presynaptic differentiation. This Mus musculus (Mouse) protein is Anaphase-promoting complex subunit 2 (Anapc2).